Reading from the N-terminus, the 605-residue chain is Elongation factor 4 (605 aa).

Positions 9 to 191 (DTIRNFCIIA…AIIKRVPAPV (183 aa)) constitute a tr-type G domain. GTP is bound by residues 21-26 (DHGKST) and 138-141 (NKID).

The protein belongs to the TRAFAC class translation factor GTPase superfamily. Classic translation factor GTPase family. LepA subfamily.

The protein resides in the cell inner membrane. The enzyme catalyses GTP + H2O = GDP + phosphate + H(+). Functionally, required for accurate and efficient protein synthesis under certain stress conditions. May act as a fidelity factor of the translation reaction, by catalyzing a one-codon backward translocation of tRNAs on improperly translocated ribosomes. Back-translocation proceeds from a post-translocation (POST) complex to a pre-translocation (PRE) complex, thus giving elongation factor G a second chance to translocate the tRNAs correctly. Binds to ribosomes in a GTP-dependent manner. In Chlorobium phaeobacteroides (strain BS1), this protein is Elongation factor 4.